The sequence spans 341 residues: Malate dehydrogenase 1, mitochondrial (341 aa).

The transit peptide at Met1–Phe22 directs the protein to the mitochondrion. NAD(+) is bound by residues Gly36–Gly42 and Asp62. Substrate contacts are provided by Arg109 and Arg115. Residues Asn122 and Ile145–Asn147 each bind NAD(+). Residues Asn147 and Arg181 each coordinate substrate. His205 acts as the Proton acceptor in catalysis. Residue Met256 participates in NAD(+) binding.

The protein belongs to the LDH/MDH superfamily. MDH type 1 family. In terms of assembly, homodimer. Post-translationally, forms intramolecular disulfide bonds. As to expression, expressed in rosette leaves.

The protein resides in the mitochondrion matrix. It carries out the reaction (S)-malate + NAD(+) = oxaloacetate + NADH + H(+). With respect to regulation, negatively regulated by ATP. Not redox-regulated. The formation of intramolecular disulfide bonds does not alter enzymatic activity. In terms of biological role, catalyzes a reversible NAD-dependent dehydrogenase reaction involved in central metabolism and redox homeostasis between organelle compartments. Required for carbon dioxide and energy partitioning in leaves. May limit photorespiration during the dark phase. Its activity is essential to shuttle reductants out from the mitochondria to support the photorespiratory flux. Can convert 2-oxoglutarate to (S)-2-hydroxyglutarate in vitro. The chain is Malate dehydrogenase 1, mitochondrial from Arabidopsis thaliana (Mouse-ear cress).